A 154-amino-acid chain; its full sequence is Homeobox protein engrailed (154 aa).

The segment at residues 37–96 is a DNA-binding region (homeobox); the sequence is EKRPRTAFSASQLQRLKQEFQQSNYLTEQRRRSLAKELTLSESQIKIWFQNKRAKIKKAS. Residues 127–154 form a disordered region; it reads KLLNGQNTSGDCSRSDYTSDSDGDSLTH. Residues 129-144 show a composition bias toward polar residues; that stretch reads LNGQNTSGDCSRSDYT. A compositionally biased stretch (acidic residues) spans 145–154; sequence SDSDGDSLTH.

It belongs to the engrailed homeobox family.

It localises to the nucleus. This chain is Homeobox protein engrailed (EN), found in Tripneustes gratilla (Hawaian sea urchin).